The chain runs to 244 residues: SURF1-like protein (244 aa).

Helical transmembrane passes span 7 to 23 and 201 to 219; these read ILTTFIILTSLGFWQLS and YAITWFGLAIFLIVIYVIY.

The protein belongs to the SURF1 family.

It localises to the cell membrane. This Rickettsia prowazekii (strain Madrid E) protein is SURF1-like protein.